We begin with the raw amino-acid sequence, 371 residues long: MELSEIKRNIDEYRNNLAQIRGSLDFENKETNIQEYEEMMTEPDFWDDQNKAQDVIDKNNALKSVVNGYHELEEEVEDMTATWELLQEELDGDVKSDLEQNVLDFKEKVDQFELQLLLDGPHDANNAILELHPGAGGTESQDWASMLLRMYQRYGEQQGFKVETVDYLPGDEAGVKSVTLLIKGHNAYGYLKAEKGVHRLVRISPFDSSGRRHTSFASCDVIPEFNNDEIEIEINPDDITVDTFRASGAGGQHINKTESAIRITHHPTGIVVNNQNERSQIKNREAAMKMLKAKLYQLKLEEQEREMAEIRGEQKEIGWGSQIRSYVFHPYSMVKDHRTNEETGKVDAVMDGEIGPFIESYLRYTMNQSDN.

Q252 is subject to N5-methylglutamine.

The protein belongs to the prokaryotic/mitochondrial release factor family. In terms of processing, methylated by PrmC. Methylation increases the termination efficiency of RF2.

It is found in the cytoplasm. In terms of biological role, peptide chain release factor 2 directs the termination of translation in response to the peptide chain termination codons UGA and UAA. This Staphylococcus haemolyticus (strain JCSC1435) protein is Peptide chain release factor 2.